The following is a 105-amino-acid chain: Met repressor (105 aa).

Belongs to the MetJ family. Homodimer.

The protein resides in the cytoplasm. This regulatory protein, when combined with SAM (S-adenosylmethionine) represses the expression of the methionine regulon and of enzymes involved in SAM synthesis. The chain is Met repressor from Yersinia enterocolitica serotype O:8 / biotype 1B (strain NCTC 13174 / 8081).